Consider the following 1960-residue polypeptide: Nuclear pore complex protein Nup98-Nup96 (1960 aa).

A run of 46 repeats spans residues phenylalanine 2–glycine 3, phenylalanine 9–glycine 10, phenylalanine 18–glycine 19, phenylalanine 30–glycine 31, phenylalanine 35–glycine 36, phenylalanine 43–glycine 44, phenylalanine 59–glycine 60, phenylalanine 73–glycine 74, phenylalanine 81–glycine 82, phenylalanine 92–glycine 93, phenylalanine 105–glycine 106, phenylalanine 117–glycine 118, phenylalanine 125–glycine 126, phenylalanine 135–glycine 136, phenylalanine 148–glycine 149, phenylalanine 160–glycine 161, phenylalanine 163–glycine 164, phenylalanine 174–glycine 175, phenylalanine 264–glycine 265, phenylalanine 266–glycine 267, phenylalanine 282–glycine 283, phenylalanine 293–glycine 294, phenylalanine 304–glycine 305, phenylalanine 309–glycine 310, phenylalanine 319–glycine 320, phenylalanine 333–glycine 334, phenylalanine 352–glycine 353, phenylalanine 358–glycine 359, phenylalanine 365–glycine 366, phenylalanine 377–glycine 378, phenylalanine 384–glycine 385, phenylalanine 387–glycine 388, phenylalanine 400–glycine 401, phenylalanine 413–glycine 414, phenylalanine 426–glycine 427, phenylalanine 428–glycine 429, phenylalanine 441–glycine 442, phenylalanine 454–glycine 455, phenylalanine 467–glycine 468, phenylalanine 493–glycine 494, phenylalanine 496–glycine 497, phenylalanine 516–glycine 517, phenylalanine 527–glycine 528, phenylalanine 546–glycine 547, phenylalanine 553–glycine 554, and phenylalanine 565–glycine 566. Positions phenylalanine 2–glycine 566 are 46 X 2 AA repeats of F-G. 2 disordered regions span residues lysine 698–proline 768 and threonine 781–glutamine 860. Residues asparagine 704–serine 718 show a composition bias toward polar residues. Residues glutamate 755 to proline 768 show a composition bias toward basic and acidic residues. 2 stretches are compositionally biased toward polar residues: residues threonine 781–asparagine 794 and arginine 806–serine 850. The Peptidase S59 domain occupies arginine 886 to phenylalanine 1028. The active-site Nucleophile is serine 1029.

This sequence belongs to the nucleoporin GLFG family. As to quaternary structure, part of the nuclear pore complex (NPC). Interacts with Rae1. Nuclear pore complex protein Nup98: Interacts with pzg and Chro. Interacts with MBD-R2; the interaction allows Nup98 recruitment to chromatin. Interacts with Trx. Interacts with Wds. Interacts with Mgtor and Cp190. Upon ecdysone stimulation, interacts with EcR, CTCF, su(Hw) and Trl. Isoform A and isoform C are autoproteolytically cleaved to yield Nup98 and Nup96 or Nup98 only, respectively. In terms of tissue distribution, expressed in brain.

It is found in the chromosome. Its subcellular location is the nucleus. It localises to the nucleoplasm. The protein resides in the nucleus membrane. The protein localises to the nuclear pore complex. In terms of biological role, part of the nuclear pore complex (NPC). Required for MAD import as part of the Nup107-160 complex and required for nuclear export of Moe probably via its association with Rae1. Plays a role in nuclear mRNA export. Promotes cell antiviral response by up-regulating FoxK-dependent antiviral gene transcription. In germline stem cells, involved in their maintenance and division together with the TGF-Beta and EGFR signaling pathways. In larval lymph glands, has a role in the maintenance of hematopoiesis by regulating Pvr expression. Functionally, part of the nuclear pore complex (NPC). In the nucleoplasm, binds to transcriptionally active chromatin with a preference for regulatory regions; co-localizes with RNA polymerase II in a RNA-independent manner and before transition into transcription elongation. Plays a role in the transcriptional memory process by stabilizing enhancer-promoter loops and by mediating anchoring of chromatin to the nuclear pore complex region. During larval development, interacts with trx and MBD-R2 and regulates transcription of developmental genes including ecdysone-responsive genes such as Eip74 and E23. Its function is as follows. Part of the nuclear pore complex (NPC). The sequence is that of Nuclear pore complex protein Nup98-Nup96 from Drosophila melanogaster (Fruit fly).